The primary structure comprises 357 residues: Protein RecA (357 aa).

Residue 74–81 (GPESSGKT) participates in ATP binding.

It belongs to the RecA family.

It is found in the cytoplasm. Can catalyze the hydrolysis of ATP in the presence of single-stranded DNA, the ATP-dependent uptake of single-stranded DNA by duplex DNA, and the ATP-dependent hybridization of homologous single-stranded DNAs. It interacts with LexA causing its activation and leading to its autocatalytic cleavage. This is Protein RecA from Bordetella petrii (strain ATCC BAA-461 / DSM 12804 / CCUG 43448).